Reading from the N-terminus, the 138-residue chain is Glia maturation factor (138 aa).

The ADF-H domain occupies 3–138 (DNQICDISNE…TEEWLKAKLK (136 aa)).

It belongs to the actin-binding proteins ADF family. GMF subfamily. As to expression, in ovaries, expressed in follicular epithelium, in polar cells, migrating border cells, and centripedal cells (at protein level).

It is found in the cell projection. Its subcellular location is the lamellipodium. The protein localises to the cytoplasm. The protein resides in the perinuclear region. It localises to the nucleus. It is found in the cell cortex. Its function is as follows. Inhibits Arp2/3-mediated actin nucleation. Together with flr, promotes Arp2/3-nucleated actin filament array disassembly. Promotes debranching. Regulates lamellipodial protrusion dynamics possibly by facilitating lamellipodial retraction. In egg chambers, enhances the retraction dynamics of cellular extensions in border cells and thus together with flr plays an important role in directional migration of border cell clusters. The protein is Glia maturation factor of Drosophila melanogaster (Fruit fly).